Consider the following 121-residue polypeptide: Small ribosomal subunit protein uS13 (121 aa).

The segment at 92-121 (RKGLPVRGQSSKTNARTVKGPRKTVANKKK) is disordered. Over residues 110–121 (KGPRKTVANKKK) the composition is skewed to basic residues.

It belongs to the universal ribosomal protein uS13 family. As to quaternary structure, part of the 30S ribosomal subunit. Forms a loose heterodimer with protein S19. Forms two bridges to the 50S subunit in the 70S ribosome.

Functionally, located at the top of the head of the 30S subunit, it contacts several helices of the 16S rRNA. In the 70S ribosome it contacts the 23S rRNA (bridge B1a) and protein L5 of the 50S subunit (bridge B1b), connecting the 2 subunits; these bridges are implicated in subunit movement. Contacts the tRNAs in the A and P-sites. The chain is Small ribosomal subunit protein uS13 from Mycoplasma mycoides subsp. mycoides SC (strain CCUG 32753 / NCTC 10114 / PG1).